Here is a 299-residue protein sequence, read N- to C-terminus: Recombination-associated protein RdgC (299 aa).

This sequence belongs to the RdgC family.

It is found in the cytoplasm. The protein localises to the nucleoid. May be involved in recombination. This is Recombination-associated protein RdgC from Neisseria meningitidis serogroup C (strain 053442).